A 278-amino-acid chain; its full sequence is Potassium/proton antiporter CemA (278 aa).

4 consecutive transmembrane segments (helical) span residues 61–81 (IFLL…FDFG), 155–175 (AVKN…LMIT), 203–223 (IILF…EVII), and 238–258 (FIFL…KYWI).

It belongs to the CemA family.

It is found in the plastid. It localises to the chloroplast inner membrane. It catalyses the reaction K(+)(in) + H(+)(out) = K(+)(out) + H(+)(in). Contributes to K(+)/H(+) antiport activity by supporting proton efflux to control proton extrusion and homeostasis in chloroplasts in a light-dependent manner to modulate photosynthesis. Prevents excessive induction of non-photochemical quenching (NPQ) under continuous-light conditions. Indirectly promotes efficient inorganic carbon uptake into chloroplasts. The chain is Potassium/proton antiporter CemA from Porphyra purpurea (Red seaweed).